A 532-amino-acid chain; its full sequence is Glucose-6-phosphate isomerase (532 aa).

The active-site Proton donor is the E330. Active-site residues include H359 and K460.

The protein belongs to the GPI family.

The protein localises to the cytoplasm. It carries out the reaction alpha-D-glucose 6-phosphate = beta-D-fructose 6-phosphate. The protein operates within carbohydrate biosynthesis; gluconeogenesis. Its pathway is carbohydrate degradation; glycolysis; D-glyceraldehyde 3-phosphate and glycerone phosphate from D-glucose: step 2/4. Catalyzes the reversible isomerization of glucose-6-phosphate to fructose-6-phosphate. This chain is Glucose-6-phosphate isomerase, found in Prochlorococcus marinus (strain MIT 9211).